The sequence spans 525 residues: Acyl-CoA-binding domain-containing protein 5 (525 aa).

Residues 43-132 form the ACB domain; that stretch reads HETRFEAAVK…MKKIIETMPM (90 aa). Residues 54-63, 74-78, lysine 100, and tyrosine 119 contribute to the an acyl-CoA site; these read IQSLPKNGSF and YSFYK. Residues 157–216 are disordered; it reads RSSDITSDLDNVLTSTPNAKTVNGKAESSDSGAESEEEEAQEEVKGAEQSDNDKKMMKKS. Over residues 158–177 the composition is skewed to polar residues; it reads SSDITSDLDNVLTSTPNAKT. Residues 181–210 are a coiled coil; sequence KAESSDSGAESEEEEAQEEVKGAEQSDNDK. Phosphoserine is present on residues serine 184, serine 185, serine 187, serine 191, serine 206, serine 270, and serine 304. The segment covering 198-216 has biased composition (basic and acidic residues); that stretch reads EEVKGAEQSDNDKKMMKKS. Residues 367-376 show a composition bias toward basic and acidic residues; it reads EVKHGGEDGR. A disordered region spans residues 367–433; sequence EVKHGGEDGR…ERWGSDRGSR (67 aa). The residue at position 419 (serine 419) is a Phosphoserine. Residues 422-432 show a composition bias toward basic and acidic residues; it reads DGERWGSDRGS. Residues 438–467 adopt a coiled-coil conformation; that stretch reads EQIALVLMRLQEDMQNVLQRLQKLETLTAL. Lysine 460 is subject to N6-acetyllysine. Residues 489-509 form a helical membrane-spanning segment; that stretch reads WWPFEMSPGVLTFAIIWPFIA.

It belongs to the ATG37 family.

The protein localises to the peroxisome membrane. Acyl-CoA binding protein which acts as the peroxisome receptor for pexophagy but is dispensable for aggrephagy and nonselective autophagy. Binds medium- and long-chain acyl-CoA esters. This chain is Acyl-CoA-binding domain-containing protein 5 (ACBD5), found in Pongo abelii (Sumatran orangutan).